The following is an 89-amino-acid chain: Small ribosomal subunit protein uS14A (89 aa).

The segment at 34–54 is disordered; sequence ESLRKLPRDSNPNRLKNRDKI.

This sequence belongs to the universal ribosomal protein uS14 family. Part of the 30S ribosomal subunit. Contacts proteins S3 and S10.

Its function is as follows. Binds 16S rRNA, required for the assembly of 30S particles and may also be responsible for determining the conformation of the 16S rRNA at the A site. The sequence is that of Small ribosomal subunit protein uS14A from Streptococcus pyogenes serotype M1.